We begin with the raw amino-acid sequence, 236 residues long: Heme oxygenase (236 aa).

H17 contributes to the heme b binding site.

The protein belongs to the heme oxygenase family.

It localises to the plastid. Its subcellular location is the chloroplast. It catalyses the reaction heme b + 3 reduced [NADPH--hemoprotein reductase] + 3 O2 = biliverdin IXalpha + CO + Fe(2+) + 3 oxidized [NADPH--hemoprotein reductase] + 3 H2O + H(+). In terms of biological role, catalyzes the opening of the heme ring with the release of iron. Key enzyme in the synthesis of the chromophoric part of the photosynthetic antennae. The protein is Heme oxygenase (pbsA) of Porphyra purpurea (Red seaweed).